The sequence spans 956 residues: Valine--tRNA ligase (956 aa).

The short motif at 43–53 (PNITGNLHIGH) is the 'HIGH' region element. Residues 556–560 (KMSKS) carry the 'KMSKS' region motif. Lys559 contacts ATP. Residues 889–920 (PKEKELKNLNKEISKIQLAINKLQQRLSNEEF) adopt a coiled-coil conformation.

The protein belongs to the class-I aminoacyl-tRNA synthetase family. ValS type 1 subfamily. As to quaternary structure, monomer.

Its subcellular location is the cytoplasm. The enzyme catalyses tRNA(Val) + L-valine + ATP = L-valyl-tRNA(Val) + AMP + diphosphate. Catalyzes the attachment of valine to tRNA(Val). As ValRS can inadvertently accommodate and process structurally similar amino acids such as threonine, to avoid such errors, it has a 'posttransfer' editing activity that hydrolyzes mischarged Thr-tRNA(Val) in a tRNA-dependent manner. This chain is Valine--tRNA ligase, found in Buchnera aphidicola subsp. Baizongia pistaciae (strain Bp).